The following is a 372-amino-acid chain: N-methyl-L-tryptophan oxidase (372 aa).

Residue 4-34 coordinates FAD; it reads DLIIIGSGSVGAAAGYYATRAGLNVLMTDAH. Cysteine 308 bears the S-8alpha-FAD cysteine mark.

It belongs to the MSOX/MTOX family. MTOX subfamily. Monomer. FAD is required as a cofactor.

The enzyme catalyses N(alpha)-methyl-L-tryptophan + O2 + H2O = L-tryptophan + formaldehyde + H2O2. In terms of biological role, catalyzes the oxidative demethylation of N-methyl-L-tryptophan. In Escherichia coli O139:H28 (strain E24377A / ETEC), this protein is N-methyl-L-tryptophan oxidase.